The primary structure comprises 313 residues: tRNA-cytidine(32) 2-sulfurtransferase (313 aa).

A PP-loop motif motif is present at residues 46–51 (SGGKDS). The [4Fe-4S] cluster site is built by Cys121, Cys124, and Cys212.

Belongs to the TtcA family. Homodimer. Requires Mg(2+) as cofactor. The cofactor is [4Fe-4S] cluster.

The protein resides in the cytoplasm. The enzyme catalyses cytidine(32) in tRNA + S-sulfanyl-L-cysteinyl-[cysteine desulfurase] + AH2 + ATP = 2-thiocytidine(32) in tRNA + L-cysteinyl-[cysteine desulfurase] + A + AMP + diphosphate + H(+). The protein operates within tRNA modification. Functionally, catalyzes the ATP-dependent 2-thiolation of cytidine in position 32 of tRNA, to form 2-thiocytidine (s(2)C32). The sulfur atoms are provided by the cysteine/cysteine desulfurase (IscS) system. This is tRNA-cytidine(32) 2-sulfurtransferase from Nitrosomonas eutropha (strain DSM 101675 / C91 / Nm57).